We begin with the raw amino-acid sequence, 119 residues long: MKNINLNRKEKRTERHKKVLRKFRKIDNDLPRLRITKTNQHIFAQLLDDNKNIVIASSSSVQLKLANGNIENSKKVGEDIAKKAISKKIKAINFDCGGSKYHGRVSALADAARKTGLKF.

This sequence belongs to the universal ribosomal protein uL18 family. As to quaternary structure, part of the 50S ribosomal subunit; part of the 5S rRNA/L5/L18/L25 subcomplex. Contacts the 5S and 23S rRNAs.

Its function is as follows. This is one of the proteins that bind and probably mediate the attachment of the 5S RNA into the large ribosomal subunit, where it forms part of the central protuberance. In Malacoplasma penetrans (strain HF-2) (Mycoplasma penetrans), this protein is Large ribosomal subunit protein uL18.